Consider the following 744-residue polypeptide: Protein zyg-11 homolog B (744 aa).

LRR repeat units lie at residues 185–208 (LPRLESLDISNTSITDITALLACK), 216–236 (MHHLKCLKMTTTQILDVVREL), and 237–261 (KHLNHLDISDDKQFTSDIALRLLEQ).

It belongs to the zyg-11 family. (Microbial infection) Interacts with SARS-COV-2 protein ORF10. As to quaternary structure, interacts with ELOC/Elongin C. Part of an E3 ubiquitin ligase complex including ZYG11B, CUL2 and Elongin BC. In terms of processing, (Microbial infection) Ubiquitinated; leading to proteasomal degradation in the presence of herpes simplex virus 1/HHV-1.

Its subcellular location is the cytoplasm. Its function is as follows. Serves as substrate adapter subunit in the E3 ubiquitin ligase complex ZYG11B-CUL2-Elongin BC. Acts to target substrates bearing N-terminal degrons for proteasomal degradation with the first four residues of substrates being the key recognition elements. Prefers Nt-Gly but also has the capacity to recognize Nt-Ser, -Ala and -Cys. Involved in the clearance of proteolytic fragments generated by caspase cleavage during apoptosis since N-terminal glycine degrons are strongly enriched at caspase cleavage sites. Also important in the quality control of protein N-myristoylation in which N-terminal glycine degrons are conditionally exposed after a failure of N-myristoylation. In addition, plays a role in the amplification of cGAS to enhance innate immune response. Mechanistically, strengthens the processes of cGAS binding with dsDNA and assembling oligomers and also accelerates and stabilizes cGAS-DNA condensation, thereby enhancing production of antiviral IFNs and inflammatory cytokines. The sequence is that of Protein zyg-11 homolog B from Homo sapiens (Human).